The chain runs to 366 residues: Histidinol-phosphate aminotransferase 2 (366 aa).

Position 226 is an N6-(pyridoxal phosphate)lysine (Lys226).

The protein belongs to the class-II pyridoxal-phosphate-dependent aminotransferase family. Histidinol-phosphate aminotransferase subfamily. Homodimer. Pyridoxal 5'-phosphate is required as a cofactor.

It catalyses the reaction L-histidinol phosphate + 2-oxoglutarate = 3-(imidazol-4-yl)-2-oxopropyl phosphate + L-glutamate. Its pathway is amino-acid biosynthesis; L-histidine biosynthesis; L-histidine from 5-phospho-alpha-D-ribose 1-diphosphate: step 7/9. This chain is Histidinol-phosphate aminotransferase 2, found in Haemophilus influenzae (strain 86-028NP).